Consider the following 265-residue polypeptide: Uridylate kinase (265 aa).

The disordered stretch occupies residues 1–29 (MTESREPHVAGSAAPRPEPANGLASGQPS). An ATP-binding site is contributed by 40-43 (KLGG). Residue Gly-81 participates in UMP binding. Gly-82 and Arg-86 together coordinate ATP. Residues Asp-101 and 162-169 (MGLPYFST) contribute to the UMP site. Residues Phe-195 and Asp-198 each contribute to the ATP site.

Belongs to the UMP kinase family. Homohexamer.

It localises to the cytoplasm. It catalyses the reaction UMP + ATP = UDP + ADP. It functions in the pathway pyrimidine metabolism; CTP biosynthesis via de novo pathway; UDP from UMP (UMPK route): step 1/1. Inhibited by UTP. Catalyzes the reversible phosphorylation of UMP to UDP. The protein is Uridylate kinase of Mycolicibacterium paratuberculosis (strain ATCC BAA-968 / K-10) (Mycobacterium paratuberculosis).